A 63-amino-acid polypeptide reads, in one-letter code: Bucandin (63 aa).

Intrachain disulfides connect C3-C24, C6-C11, C17-C39, C43-C55, and C56-C61.

In terms of tissue distribution, expressed by the venom gland.

It is found in the secreted. In terms of biological role, this toxin is described as enhancing presynaptic acetylcholine release, but neither experimental results, nor references to other sources are available. This chain is Bucandin, found in Bungarus candidus (Malayan krait).